The following is a 209-amino-acid chain: Large ribosomal subunit protein uL3 (209 aa).

The disordered stretch occupies residues 133 to 152 (THGNSLSHRVPGSIGQNQTP). Glutamine 150 carries the post-translational modification N5-methylglutamine.

It belongs to the universal ribosomal protein uL3 family. In terms of assembly, part of the 50S ribosomal subunit. Forms a cluster with proteins L14 and L19. In terms of processing, methylated by PrmB.

One of the primary rRNA binding proteins, it binds directly near the 3'-end of the 23S rRNA, where it nucleates assembly of the 50S subunit. This is Large ribosomal subunit protein uL3 from Yersinia pseudotuberculosis serotype O:1b (strain IP 31758).